Reading from the N-terminus, the 638-residue chain is Chaperone protein DnaK (638 aa).

T198 carries the post-translational modification Phosphothreonine; by autocatalysis. Positions Q603 to Q618 are enriched in low complexity. The tract at residues Q603–K638 is disordered. The segment covering D624–K638 has biased composition (acidic residues).

It belongs to the heat shock protein 70 family.

Acts as a chaperone. This is Chaperone protein DnaK from Vibrio campbellii (strain ATCC BAA-1116).